Here is a 504-residue protein sequence, read N- to C-terminus: DnaJ homolog subfamily C member 3 (504 aa).

Positions 1–31 are cleaved as a signal peptide; sequence MVAPGSVTSRLGSVFPFLLVLVDLQYEGAEC. 9 TPR repeats span residues 37 to 70, 72 to 104, 105 to 138, 154 to 187, 189 to 221, 222 to 255, 268 to 301, 306 to 339, and 340 to 373; these read VEKH…DPDN, IAYY…KMDF, TAAR…NPSE, MQRL…CVWD, ELRE…KNDN, TEAF…DQDH, LNKL…EPGV, IRSK…EPDN, and VNAL…NEND. A disulfide bridge links cysteine 248 with cysteine 258. Residue serine 274 is modified to Phosphoserine. A disulfide bridge connects residues cysteine 313 and cysteine 329. Positions 375-393 are flexible linker; sequence QIREGLEKAQRLLKQSQRR. Residues 394–462 enclose the J domain; it reads DYYKILGVKR…EMRKKFDDGE (69 aa). The segment at 451 to 481 is disordered; that stretch reads DPEMRKKFDDGEDPLDAESQQGGGGNPFHRS.

In terms of assembly, interacts with EIF2AK4/GCN2; this interaction occurs under endoplasmic reticulum (ER) stress, hypothermic and amino acid starving stress conditions and inhibits EIF2AK4/GCN2 kinase activity. Interacts with EIF2AK3. Interacts with EIF2AK2. Forms a trimeric complex with DNAJB1 and HSPA8. Interacts with THAP12.

Its subcellular location is the endoplasmic reticulum. Functionally, involved in the unfolded protein response (UPR) during endoplasmic reticulum (ER) stress. Acts as a negative regulator of the EIF2AK4/GCN2 kinase activity by preventing the phosphorylation of eIF-2-alpha at 'Ser-52' and hence attenuating general protein synthesis under ER stress, hypothermic and amino acid starving stress conditions. Co-chaperone of HSPA8/HSC70, it stimulates its ATPase activity. May inhibit both the autophosphorylation of EIF2AK2/PKR and the ability of EIF2AK2 to catalyze phosphorylation of the EIF2A. May inhibit EIF2AK3/PERK activity. The protein is DnaJ homolog subfamily C member 3 (DNAJC3) of Bos taurus (Bovine).